The primary structure comprises 220 residues: UPF0319 protein YccT (220 aa).

The N-terminal stretch at 1-20 is a signal peptide; sequence MKTGALTTFLALCLPVTVFA.

The protein belongs to the UPF0319 family.

In Salmonella choleraesuis (strain SC-B67), this protein is UPF0319 protein YccT.